Consider the following 534-residue polypeptide: CTP synthase (534 aa).

The interval 1 to 267 (MTKYIFVTGG…DQIVCDHLKL (267 aa)) is amidoligase domain. Residue S13 participates in CTP binding. Residue S13 coordinates UTP. Position 14-19 (14-19 (SIGKGI)) interacts with ATP. Y54 contributes to the L-glutamine binding site. D71 serves as a coordination point for ATP. 2 residues coordinate Mg(2+): D71 and E141. Residues 148-150 (DIE), 188-193 (KTKPTQ), and K224 contribute to the CTP site. UTP contacts are provided by residues 188 to 193 (KTKPTQ) and K224. A Glutamine amidotransferase type-1 domain is found at 292-534 (KIALVGKYVE…FVTAAVENAK (243 aa)). G354 contributes to the L-glutamine binding site. Catalysis depends on C381, which acts as the Nucleophile; for glutamine hydrolysis. L-glutamine-binding positions include 382–385 (LGMQ), E405, and R463. Residues H508 and E510 contribute to the active site.

It belongs to the CTP synthase family. In terms of assembly, homotetramer.

The catalysed reaction is UTP + L-glutamine + ATP + H2O = CTP + L-glutamate + ADP + phosphate + 2 H(+). It carries out the reaction L-glutamine + H2O = L-glutamate + NH4(+). The enzyme catalyses UTP + NH4(+) + ATP = CTP + ADP + phosphate + 2 H(+). The protein operates within pyrimidine metabolism; CTP biosynthesis via de novo pathway; CTP from UDP: step 2/2. Allosterically activated by GTP, when glutamine is the substrate; GTP has no effect on the reaction when ammonia is the substrate. The allosteric effector GTP functions by stabilizing the protein conformation that binds the tetrahedral intermediate(s) formed during glutamine hydrolysis. Inhibited by the product CTP, via allosteric rather than competitive inhibition. Catalyzes the ATP-dependent amination of UTP to CTP with either L-glutamine or ammonia as the source of nitrogen. Regulates intracellular CTP levels through interactions with the four ribonucleotide triphosphates. This Streptococcus thermophilus (strain ATCC BAA-250 / LMG 18311) protein is CTP synthase.